The primary structure comprises 842 residues: Glycogen phosphorylase, muscle form (842 aa).

At S2 the chain carries N-acetylserine. Phosphoserine; by PHK; in form phosphorylase A is present on S15. The AMP site is built by D43 and Y76. 2 positions are modified to phosphotyrosine: Y204 and Y227. 310-319 contributes to the AMP binding site; the sequence is RRFKSSKFGC. At S430 the chain carries Phosphoserine. Phosphotyrosine is present on Y473. K681 carries the post-translational modification N6-(pyridoxal phosphate)lysine. Residues S747 and S748 each carry the phosphoserine modification.

Belongs to the glycogen phosphorylase family. In terms of assembly, homodimer. Homotetramer; to form the enzymatically active phosphorylase A. Pyridoxal 5'-phosphate is required as a cofactor. Post-translationally, phosphorylation of Ser-15 converts phosphorylase B (unphosphorylated) to phosphorylase A.

It carries out the reaction [(1-&gt;4)-alpha-D-glucosyl](n) + phosphate = [(1-&gt;4)-alpha-D-glucosyl](n-1) + alpha-D-glucose 1-phosphate. Its activity is regulated as follows. Allosterically regulated through the non-covalent binding of metabolites, being activated by AMP and inhibited by ATP, ADP, and glucose-6-phosphate. The activity is also controlled by post-translational modifications including phosphorylation. Allosteric enzyme that catalyzes the rate-limiting step in glycogen catabolism, the phosphorolytic cleavage of glycogen to produce glucose-1-phosphate, and plays a central role in maintaining cellular and organismal glucose homeostasis. The protein is Glycogen phosphorylase, muscle form of Ovis aries (Sheep).